Reading from the N-terminus, the 525-residue chain is Probable alpha-galactosidase A (525 aa).

Positions methionine 1–alanine 17 are cleaved as a signal peptide. The cysteines at positions 40 and 72 are disulfide-linked. N-linked (GlcNAc...) asparagine glycosylation is found at asparagine 43, asparagine 81, and asparagine 117. Cysteine 120 and cysteine 150 are oxidised to a cystine. The active-site Nucleophile is the aspartate 148. The N-linked (GlcNAc...) asparagine glycan is linked to asparagine 197. The active-site Proton donor is the aspartate 206. Positions proline 402–alanine 525 constitute a Ricin B-type lectin domain. Disulfide bonds link cysteine 422-cysteine 434 and cysteine 459-cysteine 472.

The protein belongs to the glycosyl hydrolase 27 family.

The protein localises to the secreted. The enzyme catalyses Hydrolysis of terminal, non-reducing alpha-D-galactose residues in alpha-D-galactosides, including galactose oligosaccharides, galactomannans and galactolipids.. Hydrolyzes a variety of simple alpha-D-galactoside as well as more complex molecules such as oligosaccharides and polysaccharides. The sequence is that of Probable alpha-galactosidase A (aglA) from Aspergillus clavatus (strain ATCC 1007 / CBS 513.65 / DSM 816 / NCTC 3887 / NRRL 1 / QM 1276 / 107).